The sequence spans 575 residues: Golgi-associated kinase 1A (575 aa).

A signal peptide spans 1-29 (MASWLRRKLRGKRRPVIAFCLLMILSAMA). The propeptide at 30–119 (VTRFPPQRPS…GDLRHPGRVR (90 aa)) is removed in mature form. Residues 53-58 (TGAPAT) form an O-glycosylated at one site region. Basic and acidic residues predominate over residues 143-153 (VGDPGTKDLGH). A disordered region spans residues 143 to 162 (VGDPGTKDLGHPQHGSPIQE). Positions 437 to 575 (RYCCGFEPEP…NLTLFRDEDP (139 aa)) are cleaved as a propeptide — removed in mature form. Residue N566 is glycosylated (N-linked (GlcNAc...) asparagine).

Belongs to the GASK family. Post-translationally, O-glycosylated with core 1 or possibly core 8 glycans. In terms of processing, proteolytically cleaved. Cleaved at Arg-120 and Arg-437 leading to a processed mature product of 35 kDa. The cleavage takes place in the Golgi apparatus. Expressed in skin, lung and colon (at protein level).

Its subcellular location is the secreted. It localises to the endoplasmic reticulum. The protein resides in the golgi apparatus. The protein localises to the membrane. It is found in the caveola. The protein is Golgi-associated kinase 1A of Homo sapiens (Human).